We begin with the raw amino-acid sequence, 632 residues long: 1-deoxy-D-xylulose-5-phosphate synthase (632 aa).

Thiamine diphosphate contacts are provided by residues His87 and 128–130 (GHS). Asp159 provides a ligand contact to Mg(2+). Residues 160–161 (GA), Asn188, Phe295, and Glu378 contribute to the thiamine diphosphate site. Asn188 serves as a coordination point for Mg(2+).

The protein belongs to the transketolase family. DXPS subfamily. As to quaternary structure, homodimer. Mg(2+) is required as a cofactor. It depends on thiamine diphosphate as a cofactor.

It catalyses the reaction D-glyceraldehyde 3-phosphate + pyruvate + H(+) = 1-deoxy-D-xylulose 5-phosphate + CO2. The protein operates within metabolic intermediate biosynthesis; 1-deoxy-D-xylulose 5-phosphate biosynthesis; 1-deoxy-D-xylulose 5-phosphate from D-glyceraldehyde 3-phosphate and pyruvate: step 1/1. Its function is as follows. Catalyzes the acyloin condensation reaction between C atoms 2 and 3 of pyruvate and glyceraldehyde 3-phosphate to yield 1-deoxy-D-xylulose-5-phosphate (DXP). In Pseudomonas fluorescens (strain SBW25), this protein is 1-deoxy-D-xylulose-5-phosphate synthase.